The following is an 81-amino-acid chain: Small ribosomal subunit protein bS18 (81 aa).

Belongs to the bacterial ribosomal protein bS18 family. As to quaternary structure, part of the 30S ribosomal subunit. Forms a tight heterodimer with protein bS6.

Functionally, binds as a heterodimer with protein bS6 to the central domain of the 16S rRNA, where it helps stabilize the platform of the 30S subunit. This Leptospira borgpetersenii serovar Hardjo-bovis (strain JB197) protein is Small ribosomal subunit protein bS18.